The following is a 33-amino-acid chain: QLGPQVPAHLRTDLSKKQGPWAEEEAAYGWMDF.

Position 1 is a pyrrolidone carboxylic acid (Gln1). Phe33 is modified (phenylalanine amide).

Belongs to the gastrin/cholecystokinin family.

The protein resides in the secreted. Gastrin stimulates the stomach mucosa to produce and secrete hydrochloric acid and the pancreas to secrete its digestive enzymes. It also stimulates smooth muscle contraction and increases blood circulation and water secretion in the stomach and intestine. This chain is Gastrin (GAST), found in Cavia porcellus (Guinea pig).